The following is a 546-amino-acid chain: Arginine--tRNA ligase (546 aa).

The short motif at 122-132 (ANPTGPFTVGH) is the 'HIGH' region element.

Belongs to the class-I aminoacyl-tRNA synthetase family. In terms of assembly, monomer.

The protein localises to the cytoplasm. It catalyses the reaction tRNA(Arg) + L-arginine + ATP = L-arginyl-tRNA(Arg) + AMP + diphosphate. The sequence is that of Arginine--tRNA ligase (argS) from Thermotoga maritima (strain ATCC 43589 / DSM 3109 / JCM 10099 / NBRC 100826 / MSB8).